The sequence spans 291 residues: N-acetylmannosamine kinase (291 aa).

Residues 5–12 and 132–139 each bind ATP; these read AIDIGGTK and GVGGGVVS. Zn(2+)-binding residues include histidine 156, cysteine 166, cysteine 168, and cysteine 173.

It belongs to the ROK (NagC/XylR) family. NanK subfamily. As to quaternary structure, homodimer.

It catalyses the reaction an N-acyl-D-mannosamine + ATP = an N-acyl-D-mannosamine 6-phosphate + ADP + H(+). The protein operates within amino-sugar metabolism; N-acetylneuraminate degradation; D-fructose 6-phosphate from N-acetylneuraminate: step 2/5. Catalyzes the phosphorylation of N-acetylmannosamine (ManNAc) to ManNAc-6-P. The sequence is that of N-acetylmannosamine kinase from Escherichia coli (strain ATCC 8739 / DSM 1576 / NBRC 3972 / NCIMB 8545 / WDCM 00012 / Crooks).